A 400-amino-acid chain; its full sequence is MLKVEMLSTGDEVLHGQIVDTNAAWLADFFFHQGLPLSRRNTVGDNLDDLVTILRERSQHADVLIVNGGLGPTSDDLSALAAATAKGEGLVLHEAWLKEMERYFHERGRVMAPSNRKQAELPASAEFINNPVGTACGFAVQLNRCLMFFTPGVPSEFKVMVEHEILPRLRERFSLPQPPVCLRLTTFGRSESDLAQSLDTLQLPPGVTMGYRSSMPIIELKLTGPASEQQAMEKLWLDVKRVAGQSVIFEGTEGLPAQISRELQNRQFSLTLSEQFTGGLLALQLSRAGAPLLACEVVPSQEETLAQTAHWITERRANHFAGLALAVSGFENEHLNFALATPDGTFALRVRFSTTRYSLAIRQEVCAMMALNMLRRWLNGQDIASEHGWIEVIESMTLSV.

This sequence belongs to the CinA family.

This Escherichia coli (strain 55989 / EAEC) protein is CinA-like protein.